A 494-amino-acid polypeptide reads, in one-letter code: Alpha-amylase-related protein (494 aa).

The first 20 residues, 1-20, serve as a signal peptide directing secretion; that stretch reads MIKFALALTLCLAGASLSLA. Gln21 carries the post-translational modification Pyrrolidone carboxylic acid. Residues Cys48 and Cys104 are joined by a disulfide bond. Ca(2+) is bound by residues Asn118, Gln169, and Asp178. A disulfide bridge links Cys157 with Cys171. Arg206 contributes to the chloride binding site. Asp208 functions as the Nucleophile in the catalytic mechanism. A Ca(2+)-binding site is contributed by His212. Glu245 serves as the catalytic Proton donor. Residues Asn308 and Arg343 each coordinate chloride. 3 disulfides stabilise this stretch: Cys376–Cys382, Cys418–Cys441, and Cys448–Cys460.

Belongs to the glycosyl hydrolase 13 family. In terms of assembly, monomer. Requires Ca(2+) as cofactor. It depends on chloride as a cofactor.

The protein localises to the secreted. The enzyme catalyses Endohydrolysis of (1-&gt;4)-alpha-D-glucosidic linkages in polysaccharides containing three or more (1-&gt;4)-alpha-linked D-glucose units.. In Drosophila bakoue (Fruit fly), this protein is Alpha-amylase-related protein (Amyrel).